A 461-amino-acid polypeptide reads, in one-letter code: MDQSNRYANLNLKESDLIAGGRHVLCAYIMKPKAGFGNFVETAAHFAAESSTGTNVEVSTTDDFTRGVDALVYEVDEAKELMKIAYPIELFDRNVIDGRAMIASFLTLTIGNNQGMGDVEYAKMHDFYVPPAYLRLFDGPSTTIKDLWRVLGRPVVDGGFIVGTIIKPKLGLRPQPFADACYDFWLGGDFIKNDEPQGNQVFAPFKDTVRAVNDAMRRAQDATGQPKLFSFNITADDHYEMLARGEYILETFGENADHVAFLVDGYVAGPAAVTTARRAFPKQYLHYHRAGHGAVTSPQSKRGYTAFVLSKMARLQGASGIHVGTMGYGKMEGEASDRDSAFMITQDSAEGPYFKQEWLGMNPTTPIISGGMNALRMPGFFANLGHSNLIMTAGGGAFGHIDGGAAGARSLRQAEQCWKQGADPVAFAKDHREFARAFESFPNDADKLYPNWRNMLKLAAA.

Residue Asn112 participates in substrate binding. Lys167 serves as the catalytic Proton acceptor. A substrate-binding site is contributed by Lys169. Lys192, Asp194, and Glu195 together coordinate Mg(2+). Lys192 carries the N6-carboxylysine modification. Residue His288 is the Proton acceptor of the active site. Substrate contacts are provided by Arg289, His322, and Ser369.

This sequence belongs to the RuBisCO large chain family. Type II subfamily. Homodimer. It depends on Mg(2+) as a cofactor.

The catalysed reaction is 2 (2R)-3-phosphoglycerate + 2 H(+) = D-ribulose 1,5-bisphosphate + CO2 + H2O. It carries out the reaction D-ribulose 1,5-bisphosphate + O2 = 2-phosphoglycolate + (2R)-3-phosphoglycerate + 2 H(+). RuBisCO catalyzes two reactions: the carboxylation of D-ribulose 1,5-bisphosphate, the primary event in carbon dioxide fixation, as well as the oxidative fragmentation of the pentose substrate. Both reactions occur simultaneously and in competition at the same active site. This Rhodopseudomonas palustris (strain BisB5) protein is Ribulose bisphosphate carboxylase.